Reading from the N-terminus, the 368-residue chain is Seven-bladed beta-propeller protein MSMEG_5308 (368 aa).

In terms of assembly, interacts with MmpL3 and TtfA.

Its subcellular location is the cell septum. It localises to the cell tip. In terms of biological role, stabilizes the MmpL3/TtfA trehalose monomycolate (TMM) transport complex under stress conditions. This Mycolicibacterium smegmatis (strain ATCC 700084 / mc(2)155) (Mycobacterium smegmatis) protein is Seven-bladed beta-propeller protein MSMEG_5308.